Reading from the N-terminus, the 416-residue chain is Tryptophan synthase beta chain (416 aa).

The interval 1-23 is disordered; it reads MTSTLPSQPKDMELANSSRPSVH. Lys109 carries the N6-(pyridoxal phosphate)lysine modification.

This sequence belongs to the TrpB family. Tetramer of two alpha and two beta chains. Pyridoxal 5'-phosphate serves as cofactor.

It carries out the reaction (1S,2R)-1-C-(indol-3-yl)glycerol 3-phosphate + L-serine = D-glyceraldehyde 3-phosphate + L-tryptophan + H2O. It participates in amino-acid biosynthesis; L-tryptophan biosynthesis; L-tryptophan from chorismate: step 5/5. Functionally, the beta subunit is responsible for the synthesis of L-tryptophan from indole and L-serine. The chain is Tryptophan synthase beta chain from Prochlorococcus marinus (strain MIT 9211).